A 108-amino-acid polypeptide reads, in one-letter code: Iron-sulfur cluster assembly protein CyaY (108 aa).

It belongs to the frataxin family.

Functionally, involved in iron-sulfur (Fe-S) cluster assembly. May act as a regulator of Fe-S biogenesis. The sequence is that of Iron-sulfur cluster assembly protein CyaY from Burkholderia cenocepacia (strain ATCC BAA-245 / DSM 16553 / LMG 16656 / NCTC 13227 / J2315 / CF5610) (Burkholderia cepacia (strain J2315)).